Here is a 230-residue protein sequence, read N- to C-terminus: 2,3-bisphosphoglycerate-dependent phosphoglycerate mutase (230 aa).

Residues 8-15 (RHGESEWN), 21-22 (TG), Arg-60, 87-90 (ERHY), Lys-98, 114-115 (RR), and 183-184 (GN) each bind substrate. Catalysis depends on His-9, which acts as the Tele-phosphohistidine intermediate. The Proton donor/acceptor role is filled by Glu-87.

It belongs to the phosphoglycerate mutase family. BPG-dependent PGAM subfamily.

The enzyme catalyses (2R)-2-phosphoglycerate = (2R)-3-phosphoglycerate. The protein operates within carbohydrate degradation; glycolysis; pyruvate from D-glyceraldehyde 3-phosphate: step 3/5. In terms of biological role, catalyzes the interconversion of 2-phosphoglycerate and 3-phosphoglycerate. This Streptococcus mutans serotype c (strain ATCC 700610 / UA159) protein is 2,3-bisphosphoglycerate-dependent phosphoglycerate mutase.